The primary structure comprises 316 residues: Probable thioesterase lcsE (316 aa).

Belongs to the AMT4 thioesterase family.

It participates in secondary metabolite biosynthesis. Its function is as follows. Probable thioesterase; part of the gene cluster that mediates the biosynthesis of the lipopeptide antibiotics leucinostatins that show extensive biological activities, including antimalarial, antiviral, antibacterial, antifungal, and antitumor activities, as well as phytotoxic. Leucinostatin A contains nine amino acid residues, including the unusual amino acid 4-methyl-L-proline (MePro), 2-amino-6-hydroxy-4-methyl-8-oxodecanoic acid (AHyMeOA), 3-hydroxyleucine (HyLeu), alpha-aminoisobutyric acid (AIB), beta-Ala, a 4-methylhex-2-enoic acid at the N-terminus as well as a N1,N1-dimethylpropane-1,2-diamine (DPD) at the C-terminus. The biosynthesis of leucinostatins is probably initiated with the assembly of 4-methylhex-2-enoic acid by a reducing PKS. Two reducing polyketide synthases, lcsB and lcsC, have been identified in the cluster and it is not clear which is the one that assembles 4-methylhex-2-enoic acid since both contain KS, AT, DH, cMT, ER, KR and ACP domains. The polyketide residue might be transferred to the NRPS lcsA, mediated by two additional enzymes, the acyl-CoA ligase lcsD and the thioesterase lcsE. The linear polyketide carboxylic acid, which is released from PKS, is converted to a CoA thioester by lcsD, and then lcsE hydrolyzes the thiol bond and shuttles the polyketide intermediate to lcsA. The C domain of the first module catalyzed the condensation of 4-methylhex-2-enoic acid and MePro carried by domain A1, followed by successive condensations of nine amino acids to trigger the elongation of the linear peptide. A5 and A6 domains of lcsA are proposed to incorporate leucine, A2 AHyMeOA, and A3 incorporates HyLeu. A4, A7 and A8 incorporate AIB. The AHyMeOA in leucinostatin A activated by the A2 might be produced by the second PKS (lcsB or lcsC) present within the cluster. The MePro is probably produced via leucine cyclization and may originate from a separate pathway, independent of the cluster. Another nonproteinogenic amino acid, beta-Ala, could be produced by an aspartic acid decarboxylase also localized outside of the cluster. Two candidates are VFPBJ_01400 and VFPBJ_10476. The final peptide scaffold may be released by the NAD(P)H-dependent thioester reductase (TE) at the C-terminal region of lcsA. Transamination of the lcsA product by the transaminase lcsP may produce DPD at the C-terminus. Further hydroxylation steps performed alternatively by the cytochrome P450 monooxygenases lcsI, lcsK and lcsN then yield the non-methylated leucinostatins precursor. It is also possible that leucines can be hydroxylated prior to their incorporation into the peptide. Varying extents of methylation then lead to the formation of leucinostatins A and B. The protein is Probable thioesterase lcsE of Purpureocillium lilacinum (Paecilomyces lilacinus).